Reading from the N-terminus, the 329-residue chain is Ribonucleoside-diphosphate reductase small chain (329 aa).

Fe cation is bound by residues aspartate 75, glutamate 106, and histidine 109. Tyrosine 113 is a catalytic residue. The Fe cation site is built by glutamate 168, glutamate 202, and histidine 205.

It belongs to the ribonucleoside diphosphate reductase small chain family. Heterodimer of a large and a small chain. It depends on Fe cation as a cofactor.

The protein resides in the cytoplasm. The enzyme catalyses a 2'-deoxyribonucleoside 5'-diphosphate + [thioredoxin]-disulfide + H2O = a ribonucleoside 5'-diphosphate + [thioredoxin]-dithiol. Functionally, provides the precursors necessary for DNA synthesis. Catalyzes the biosynthesis of deoxyribonucleotides from the corresponding ribonucleotides. This chain is Ribonucleoside-diphosphate reductase small chain, found in Nicotiana tabacum (Common tobacco).